The primary structure comprises 65 residues: Large ribosomal subunit protein bL31 (65 aa).

4 residues coordinate Zn(2+): C16, C18, C36, and C39.

It belongs to the bacterial ribosomal protein bL31 family. Type A subfamily. In terms of assembly, part of the 50S ribosomal subunit. The cofactor is Zn(2+).

Functionally, binds the 23S rRNA. The polypeptide is Large ribosomal subunit protein bL31 (Carboxydothermus hydrogenoformans (strain ATCC BAA-161 / DSM 6008 / Z-2901)).